Here is a 69-residue protein sequence, read N- to C-terminus: Large ribosomal subunit protein uL29 (69 aa).

It belongs to the universal ribosomal protein uL29 family.

The chain is Large ribosomal subunit protein uL29 from Staphylococcus aureus (strain Mu3 / ATCC 700698).